A 243-amino-acid polypeptide reads, in one-letter code: 1-(5-phosphoribosyl)-5-[(5-phosphoribosylamino)methylideneamino] imidazole-4-carboxamide isomerase (243 aa).

The active-site Proton acceptor is the Asp-8. Asp-130 (proton donor) is an active-site residue.

The protein belongs to the HisA/HisF family.

Its subcellular location is the cytoplasm. It catalyses the reaction 1-(5-phospho-beta-D-ribosyl)-5-[(5-phospho-beta-D-ribosylamino)methylideneamino]imidazole-4-carboxamide = 5-[(5-phospho-1-deoxy-D-ribulos-1-ylimino)methylamino]-1-(5-phospho-beta-D-ribosyl)imidazole-4-carboxamide. Its pathway is amino-acid biosynthesis; L-histidine biosynthesis; L-histidine from 5-phospho-alpha-D-ribose 1-diphosphate: step 4/9. The chain is 1-(5-phosphoribosyl)-5-[(5-phosphoribosylamino)methylideneamino] imidazole-4-carboxamide isomerase from Ruthia magnifica subsp. Calyptogena magnifica.